The primary structure comprises 87 residues: Small ribosomal subunit protein bS20 (87 aa).

The interval 1–29 is disordered; that stretch reads MANTAQARKRARQAVKQNAHNSSQRSTLR. Positions 20–29 are enriched in polar residues; the sequence is HNSSQRSTLR.

This sequence belongs to the bacterial ribosomal protein bS20 family.

Functionally, binds directly to 16S ribosomal RNA. The chain is Small ribosomal subunit protein bS20 from Janthinobacterium sp. (strain Marseille) (Minibacterium massiliensis).